Here is a 426-residue protein sequence, read N- to C-terminus: 3-phosphoshikimate 1-carboxyvinyltransferase (426 aa).

Residues K22, S23, and R27 each contribute to the 3-phosphoshikimate site. K22 lines the phosphoenolpyruvate pocket. Phosphoenolpyruvate-binding residues include G96 and R124. S170, S171, Q172, S198, D314, N337, and K341 together coordinate 3-phosphoshikimate. Position 172 (Q172) interacts with phosphoenolpyruvate. Residue D314 is the Proton acceptor of the active site. Phosphoenolpyruvate contacts are provided by R345, R387, and K412.

This sequence belongs to the EPSP synthase family. In terms of assembly, monomer.

Its subcellular location is the cytoplasm. The enzyme catalyses 3-phosphoshikimate + phosphoenolpyruvate = 5-O-(1-carboxyvinyl)-3-phosphoshikimate + phosphate. The protein operates within metabolic intermediate biosynthesis; chorismate biosynthesis; chorismate from D-erythrose 4-phosphate and phosphoenolpyruvate: step 6/7. Catalyzes the transfer of the enolpyruvyl moiety of phosphoenolpyruvate (PEP) to the 5-hydroxyl of shikimate-3-phosphate (S3P) to produce enolpyruvyl shikimate-3-phosphate and inorganic phosphate. This chain is 3-phosphoshikimate 1-carboxyvinyltransferase, found in Aliivibrio fischeri (strain ATCC 700601 / ES114) (Vibrio fischeri).